The chain runs to 282 residues: uncharacterized protein (282 aa).

This is an uncharacterized protein from Rickettsia conorii (strain ATCC VR-613 / Malish 7).